Reading from the N-terminus, the 465-residue chain is Amino-acid carrier protein AlsT (465 aa).

Transmembrane regions (helical) follow at residues 20–40, 82–102, 142–162, 177–197, 208–228, 241–261, 296–316, 336–356, 382–402, and 405–425; these read LFYILIGLGLFFTIRFGFIQF, VALAIATGGPGAVFWMWVVAA, WLGIVFAILITVSFGLIFNAV, VNKIVVAIVLAVLTAFIIFGG, IVPVMAGIYILIALFVVITNI, NALGFEQVVGGGIGGIIVIGA, LGVFFDTFIICTSTAFIILLY, IGGWAPTFIAVAMFLFAFSSV, IAVIAMVVYGSLSGFQIVWDM, and LFMGIMALINLIVIALLSNVA.

This sequence belongs to the alanine or glycine:cation symporter (AGCS) (TC 2.A.25) family.

The protein resides in the cell membrane. In Bacillus subtilis (strain 168), this protein is Amino-acid carrier protein AlsT (alsT).